Consider the following 540-residue polypeptide: CWF19-like protein 1 (540 aa).

Residues Glu265–Pro326 are disordered. The span at Pro267–Lys277 shows a compositional bias: basic and acidic residues.

This sequence belongs to the CWF19 family.

This Xenopus laevis (African clawed frog) protein is CWF19-like protein 1 (cwf19l1).